The sequence spans 48 residues: Light-harvesting polypeptide B-885 beta-1 chain (48 aa).

At Ala-1–Thr-20 the chain is on the cytoplasmic side. The chain crosses the membrane as a helical span at residues Leu-21–Trp-43. His-37 serves as a coordination point for a bacteriochlorophyll. At Arg-44–Gln-48 the chain is on the periplasmic side.

This sequence belongs to the antenna complex beta subunit family. The core complex is formed by different alpha and beta chains, binding bacteriochlorophyll molecules, and arranged most probably in tetrameric structures disposed around the reaction center. The non-pigmented gamma chains may constitute additional components.

The protein resides in the cell inner membrane. In terms of biological role, antenna complexes are light-harvesting systems, which transfer the excitation energy to the reaction centers. The polypeptide is Light-harvesting polypeptide B-885 beta-1 chain (Rhodocyclus tenuis (Rhodospirillum tenue)).